We begin with the raw amino-acid sequence, 99 residues long: Putative membrane protein insertion efficiency factor (99 aa).

It belongs to the UPF0161 family.

The protein resides in the cell membrane. Could be involved in insertion of integral membrane proteins into the membrane. The chain is Putative membrane protein insertion efficiency factor from Corynebacterium efficiens (strain DSM 44549 / YS-314 / AJ 12310 / JCM 11189 / NBRC 100395).